Reading from the N-terminus, the 200-residue chain is Probable nicotinate-nucleotide adenylyltransferase (200 aa).

This sequence belongs to the NadD family.

The catalysed reaction is nicotinate beta-D-ribonucleotide + ATP + H(+) = deamido-NAD(+) + diphosphate. It functions in the pathway cofactor biosynthesis; NAD(+) biosynthesis; deamido-NAD(+) from nicotinate D-ribonucleotide: step 1/1. Catalyzes the reversible adenylation of nicotinate mononucleotide (NaMN) to nicotinic acid adenine dinucleotide (NaAD). The chain is Probable nicotinate-nucleotide adenylyltransferase from Lachnoclostridium phytofermentans (strain ATCC 700394 / DSM 18823 / ISDg) (Clostridium phytofermentans).